A 337-amino-acid polypeptide reads, in one-letter code: Carbonic anhydrase 14 (337 aa).

The N-terminal stretch at 1-15 (MLFSALLLEVIWILA) is a signal peptide. Over 16–290 (ADGGQHWTYE…AGSSYTTGEM (275 aa)) the chain is Extracellular. The Alpha-carbonic anhydrase domain maps to 20-278 (QHWTYEGPHG…LNQRMVFASF (259 aa)). Residues cysteine 40 and cysteine 221 are joined by a disulfide bond. The active-site Proton donor/acceptor is the histidine 84. Residues histidine 109, histidine 111, and histidine 135 each coordinate Zn(2+). A glycan (N-linked (GlcNAc...) asparagine) is linked at asparagine 213. 217 to 218 (TT) is a substrate binding site. A helical membrane pass occupies residues 291–311 (LSLGVGILVGCLCLLLAVYFI). Residues 312-337 (ARKIRKKRLENRKSVVFTSAQATTEA) are Cytoplasmic-facing. Serine 325 is modified (phosphoserine).

This sequence belongs to the alpha-carbonic anhydrase family. Requires Zn(2+) as cofactor. In terms of tissue distribution, high expression in all parts of the central nervous system and lower expression in adult liver, heart, small intestine, colon, kidney, urinary bladder and skeletal muscle.

It localises to the membrane. It carries out the reaction hydrogencarbonate + H(+) = CO2 + H2O. Activated by histamine, L-adrenaline, L- and D-histidine, and L- and D-phenylalanine. Inhibited by coumarins, saccharin, sulfonamide derivatives such as acetazolamide (AZA) and Foscarnet (phosphonoformate trisodium salt). Reversible hydration of carbon dioxide. This Homo sapiens (Human) protein is Carbonic anhydrase 14 (CA14).